Reading from the N-terminus, the 125-residue chain is Small ribosomal subunit protein uS12m (125 aa).

Disordered regions lie at residues 1–50 (MPTL…SAPR) and 106–125 (GIPN…PKSI). The span at 10-23 (HGREEKRRTDRTRA) shows a compositional bias: basic and acidic residues.

It belongs to the universal ribosomal protein uS12 family.

The protein resides in the mitochondrion. Functionally, protein S12 is involved in the translation initiation step. This chain is Small ribosomal subunit protein uS12m (RPS12), found in Magnolia soulangeana (Saucer magnolia).